We begin with the raw amino-acid sequence, 201 residues long: MRTGEIHRVTGETDVSVRLGLDGSGRCQASTGVPFLDHMLHQISSHGLIDLEITASGDTHIDDHHTNEDVGIAFGQALSKALGDRRGIYRFGHFVAPLDEALVQVVLDCSGRPHISWGLTIPTQKIGTYDTELVKEFFVAVVNNSGLTLHIRQLDGVNSHHIVEACFKAFSRALRMATEIDPRRSGLVPSSKGVLEQAGGS.

Belongs to the imidazoleglycerol-phosphate dehydratase family.

It localises to the cytoplasm. The enzyme catalyses D-erythro-1-(imidazol-4-yl)glycerol 3-phosphate = 3-(imidazol-4-yl)-2-oxopropyl phosphate + H2O. Its pathway is amino-acid biosynthesis; L-histidine biosynthesis; L-histidine from 5-phospho-alpha-D-ribose 1-diphosphate: step 6/9. This chain is Imidazoleglycerol-phosphate dehydratase, found in Synechococcus sp. (strain CC9311).